A 140-amino-acid polypeptide reads, in one-letter code: Callisulfakinin (140 aa).

The signal sequence occupies residues 1–30 (MYSQQRIFNSKYFIFFIAVLSIFWLPTMSA). Positions 31–109 (RNLENSKNEN…LEYEDEDRSK (79 aa)) are excised as a propeptide. Sulfotyrosine is present on Tyr-114. Phe-119 is modified (phenylalanine amide). Position 131 is a sulfotyrosine (Tyr-131). Residue Phe-136 is modified to Phenylalanine amide. The propeptide occupies 139-140 (SI).

The protein belongs to the gastrin/cholecystokinin family. In brain, it is specifically expressed in four pairs of neurons. Not expressed in other cells of the brain and in the thoracico-abdominal ganglion.

It is found in the secreted. In terms of biological role, callisulfakinin I is a neuropeptide. The existence of Callisulfakinin II is uncertain. The protein is Callisulfakinin of Calliphora vomitoria (Blue bottle fly).